The primary structure comprises 516 residues: Beta-glucosidase 1 (516 aa).

The N-terminal stretch at 1–21 (MGHRLVVVLLLALLVAGAARA) is a signal peptide. Glutamine 68 is an a beta-D-glucoside binding site. N-linked (GlcNAc...) asparagine glycosylation occurs at asparagine 96. A beta-D-glucoside-binding positions include histidine 169 and 214-215 (NE). The active-site Proton donor is the glutamate 215. The cysteines at positions 234 and 237 are disulfide-linked. N-linked (GlcNAc...) asparagine glycosylation occurs at asparagine 290. Tyrosine 353 contributes to the a beta-D-glucoside binding site. The N-linked (GlcNAc...) asparagine glycan is linked to asparagine 364. Glutamate 424 contacts a beta-D-glucoside. Catalysis depends on glutamate 424, which acts as the Nucleophile. Asparagine 432 is a glycosylation site (N-linked (GlcNAc...) asparagine). Residues tryptophan 471, 478 to 479 (EW), and phenylalanine 487 contribute to the a beta-D-glucoside site.

This sequence belongs to the glycosyl hydrolase 1 family.

It catalyses the reaction Hydrolysis of terminal, non-reducing beta-D-glucosyl residues with release of beta-D-glucose.. The polypeptide is Beta-glucosidase 1 (BGLU1) (Oryza sativa subsp. japonica (Rice)).